The primary structure comprises 71 residues: DNA-directed RNA polymerase subunit omega (71 aa).

Belongs to the RNA polymerase subunit omega family. As to quaternary structure, the RNAP catalytic core consists of 2 alpha, 1 beta, 1 beta' and 1 omega subunit. When a sigma factor is associated with the core the holoenzyme is formed, which can initiate transcription.

It catalyses the reaction RNA(n) + a ribonucleoside 5'-triphosphate = RNA(n+1) + diphosphate. Promotes RNA polymerase assembly. Latches the N- and C-terminal regions of the beta' subunit thereby facilitating its interaction with the beta and alpha subunits. This is DNA-directed RNA polymerase subunit omega from Syntrophomonas wolfei subsp. wolfei (strain DSM 2245B / Goettingen).